Reading from the N-terminus, the 425-residue chain is GPI mannosyltransferase 1 (425 aa).

9 helical membrane passes run 11 to 31 (VIGA…WQDA), 85 to 105 (FFAF…WLIA), 144 to 164 (LLGV…VSLA), 166 to 186 (VILG…PAVV), 233 to 253 (IHLT…MYIL), 295 to 315 (FESL…PLVL), 340 to 360 (SQYF…SSLM), 367 to 387 (ILVG…GYNL), and 398 to 418 (GLFL…GIIV).

This sequence belongs to the PIGM family.

The protein resides in the endoplasmic reticulum membrane. The protein operates within glycolipid biosynthesis; glycosylphosphatidylinositol-anchor biosynthesis. In terms of biological role, mannosyltransferase involved in glycosylphosphatidylinositol-anchor biosynthesis. Transfers the first alpha-1,4-mannose to GlcN-acyl-PI during GPI precursor assembly. Required for cell wall integrity. The sequence is that of GPI mannosyltransferase 1 (gpi14) from Aspergillus fumigatus (strain ATCC MYA-4609 / CBS 101355 / FGSC A1100 / Af293) (Neosartorya fumigata).